We begin with the raw amino-acid sequence, 276 residues long: Large ribosomal subunit protein uL2 (276 aa).

Disordered regions lie at residues 1-60 (MSIK…RHKR) and 226-276 (NAVD…KRNQ). Basic and acidic residues predominate over residues 20–31 (SKEEITREEPEK). 2 stretches are compositionally biased toward basic residues: residues 50-60 (STRRQGGRHKR) and 258-276 (KTRRKAKKSDKYIVKKRNQ).

The protein belongs to the universal ribosomal protein uL2 family. As to quaternary structure, part of the 50S ribosomal subunit. Forms a bridge to the 30S subunit in the 70S ribosome.

Its function is as follows. One of the primary rRNA binding proteins. Required for association of the 30S and 50S subunits to form the 70S ribosome, for tRNA binding and peptide bond formation. It has been suggested to have peptidyltransferase activity; this is somewhat controversial. Makes several contacts with the 16S rRNA in the 70S ribosome. This chain is Large ribosomal subunit protein uL2, found in Natranaerobius thermophilus (strain ATCC BAA-1301 / DSM 18059 / JW/NM-WN-LF).